We begin with the raw amino-acid sequence, 125 residues long: Small ribosomal subunit protein uS13 (125 aa).

Over residues 94 to 116 (GLPVRGQRTRTNARTRKGPRKAV) the composition is skewed to basic residues. The tract at residues 94–125 (GLPVRGQRTRTNARTRKGPRKAVRASSAKAGR) is disordered.

Belongs to the universal ribosomal protein uS13 family. Part of the 30S ribosomal subunit. Forms a loose heterodimer with protein S19. Forms two bridges to the 50S subunit in the 70S ribosome.

Located at the top of the head of the 30S subunit, it contacts several helices of the 16S rRNA. In the 70S ribosome it contacts the 23S rRNA (bridge B1a) and protein L5 of the 50S subunit (bridge B1b), connecting the 2 subunits; these bridges are implicated in subunit movement. Contacts the tRNAs in the A and P-sites. The protein is Small ribosomal subunit protein uS13 of Nitrosospira multiformis (strain ATCC 25196 / NCIMB 11849 / C 71).